The primary structure comprises 387 residues: MNTVVIVDCLRTPMGRSKGGAFRHQRAEDLSAHLMKGILARNPQVNPKEIEDIYWGCVQQTLEQGFNVARNAALLAGLPIEIGAVTVNRLCGSSMQALHDAARAIMVGDAEICLVGGVEHMGHVPMTHGVDFHPGLSKNVAKAAGMMGLTAEMLGKLHGISRQQQDEFAARSHARAHAATLEGRFKNEILPTEGHAADGTLFTLDYDEVIRPETTVAGLAELRPVFDPANGTVTAGTSSALSDGASAMLVMSEQKAKALGLTIRARIKAMAVAGCDPSIMGYGPVPATHKALQRAGLTMQDMDVVELNEAFAAQSLPCAKDLGLLEMMDDKVNLNGGAIALGHPLGCSGTRISTTLINLMEAKDAKYGLATMCIGLGQGIATIFERP.

The active-site Acyl-thioester intermediate is Cys91. Catalysis depends on proton acceptor residues His343 and Cys373.

This sequence belongs to the thiolase-like superfamily. Thiolase family. In terms of assembly, heterotetramer of two alpha chains (FadB) and two beta chains (FadA).

It localises to the cytoplasm. It catalyses the reaction an acyl-CoA + acetyl-CoA = a 3-oxoacyl-CoA + CoA. It participates in lipid metabolism; fatty acid beta-oxidation. Catalyzes the final step of fatty acid oxidation in which acetyl-CoA is released and the CoA ester of a fatty acid two carbons shorter is formed. The chain is 3-ketoacyl-CoA thiolase from Vibrio cholerae serotype O1 (strain ATCC 39315 / El Tor Inaba N16961).